The sequence spans 209 residues: MTDSVELEPAAAAQLFGDRLPIARTFTANLASQGEERGLIGPLELPRLWSRHILNSAIVAPLLRPGVVGDVGSGAGLPGLVLAIARPDVSFVLIEPMDRRVIWLNEQVAELGLLNVDIVRARAEDAKLAKPLDQVTARAVSAFRKLLPLTAPLLRDGGELVLMKGAAAQAEIDGAAKEISKFKVRGAEVIVLGEGVLDEVTRVIRATVR.

Residues G72, L77, 123 to 124 (AE), and R138 contribute to the S-adenosyl-L-methionine site.

This sequence belongs to the methyltransferase superfamily. RNA methyltransferase RsmG family.

Its subcellular location is the cytoplasm. In terms of biological role, specifically methylates the N7 position of guanine in position 518 of 16S rRNA. This Leifsonia xyli subsp. xyli (strain CTCB07) protein is Ribosomal RNA small subunit methyltransferase G.